We begin with the raw amino-acid sequence, 218 residues long: MNLQNNKGKFNKEQFCQLEDEQVIEKVHVGDSDALDYLITKYRNFVRAKARSYFLIGADREDIVQEGMIGLYKSIRDFKEDKLTSFKAFAELCITRQIITAIKTATRQKHIPLNSYASLDKPIFDEESDRTLLDVISGAKTLNPEEMIINQEEFDDIEMKMGELLSDLERKVLVLYLDGRSYQEISDELNRHVKSIDNALQRVKRKLEKYLEIREISL.

The Polymerase core binding signature appears at 62–75; sequence DIVQEGMIGLYKSI. The H-T-H motif DNA-binding region spans 182–201; the sequence is YQEISDELNRHVKSIDNALQ.

The protein belongs to the sigma-70 factor family. As to quaternary structure, interacts transiently with the RNAP core.

Functionally, sigma factors are initiation factors that promote the attachment of RNA polymerase (RNAP) to specific initiation sites and are then released. This sigma factor is involved in the transition to post-exponential phase in the beginning of sporulation. It is also required for transcription of several stationary phase genes. Association with the RNAP core increases rapidly in early exponential phase, and reamins constant expression level after. This Bacillus subtilis (strain 168) protein is RNA polymerase sigma-H factor (sigH).